Reading from the N-terminus, the 59-residue chain is Large ribosomal subunit protein bL32 (59 aa).

The disordered stretch occupies residues 1–23; the sequence is MAVQQNKKSPSKRGMHRSHDFLT.

It belongs to the bacterial ribosomal protein bL32 family.

This chain is Large ribosomal subunit protein bL32, found in Burkholderia multivorans (strain ATCC 17616 / 249).